Here is a 148-residue protein sequence, read N- to C-terminus: Lysozyme C (148 aa).

The signal sequence occupies residues 1–18 (MKAPLLLGLLLLSVTVQG). One can recognise a C-type lysozyme domain in the interval 19-148 (KVFERCDLAR…VSQYVRNCGV (130 aa)). 4 cysteine pairs are disulfide-bonded: C24–C146, C48–C134, C83–C99, and C95–C113. Catalysis depends on residues E53 and D71.

It belongs to the glycosyl hydrolase 22 family. In terms of assembly, monomer.

The protein localises to the secreted. It carries out the reaction Hydrolysis of (1-&gt;4)-beta-linkages between N-acetylmuramic acid and N-acetyl-D-glucosamine residues in a peptidoglycan and between N-acetyl-D-glucosamine residues in chitodextrins.. Lysozymes have primarily a bacteriolytic function; those in tissues and body fluids are associated with the monocyte-macrophage system and enhance the activity of immunoagents. In Leptonychotes weddellii (Weddell seal), this protein is Lysozyme C (LYZ).